The chain runs to 77 residues: Putative antitoxin VapB3 (77 aa).

Residues R10–A60 are a coiled coil.

As to quaternary structure, forms a complex with putative toxin VapC3, possibly VapB(2)-VapC(2).

Functionally, antitoxin component of a type II toxin-antitoxin (TA) system. This Pyrobaculum aerophilum (strain ATCC 51768 / DSM 7523 / JCM 9630 / CIP 104966 / NBRC 100827 / IM2) protein is Putative antitoxin VapB3 (vAPb3).